The sequence spans 388 residues: Basigin (388 aa).

The N-terminal stretch at 1–22 (MAAALLLALAFTFLSGQGACAA) is a signal peptide. Over 23–326 (AGFLKAPMSQ…ISLRVRSRLA (304 aa)) the chain is Extracellular. An Ig-like domain is found at 37 to 120 (GGSVVLHCEA…SSDPDRNHLT (84 aa)). 3 disulfide bridges follow: Cys44–Cys108, Cys157–Cys203, and Cys242–Cys304. The Ig-like C2-type domain occupies 138–219 (EPGTIVTSVQ…VGRGNINVEG (82 aa)). N-linked (GlcNAc...) asparagine glycosylation is found at Asn160, Asn269, and Asn305. The Ig-like V-type domain maps to 221–320 (PRIKVGKKSE…GSARETISLR (100 aa)). A helical membrane pass occupies residues 327–347 (ALWPFLGIVAEVLVLVTIIFI). Over 348 to 388 (YEKRRKPDQTLDEDDPGAAPLKGSGSHLNDKDKNVRQRNAT) the chain is Cytoplasmic. The segment at 355–388 (DQTLDEDDPGAAPLKGSGSHLNDKDKNVRQRNAT) is disordered. A Phosphothreonine modification is found at Thr357. A Phosphoserine modification is found at Ser371.

In terms of assembly, homooligomer. Interacts with NXNL1, SLC2A1 and SLC16A1/GLUT1. Interacts with XKR8; promoting its localization at the cell membrane. Homooligomer. Interacts with SLC16A1; interaction mediates SLC16A1 targeting to the plasma membrane. Interacts with SLC16A3; interaction mediates SLC16A3 targeting to the plasma membrane. Interacts with VEGFA, KDR/VEGFR2, PPIA/CYPA, SLC16A12, SLC16A11, ATP1B2, MAG, L1CAM and AJAP1. Interacts with PPIL2; regulates BSG transport to the cell membrane. As to quaternary structure, interacts with SLC16A6; this interaction mediates targeting to the plasma membrane. In terms of tissue distribution, expressed in the skeletal muscle, liver, small intestine, kidney, testis, brain, heart and spleen. Also present in various immature cells and endothelia.

Its subcellular location is the cell membrane. It is found in the photoreceptor inner segment. The protein localises to the cell projection. The protein resides in the cilium. It localises to the photoreceptor outer segment. Its subcellular location is the endoplasmic reticulum membrane. It is found in the basolateral cell membrane. Essential for normal retinal maturation and development. Acts as a retinal cell surface receptor for NXNL1 and plays an important role in NXNL1-mediated survival of retinal cone photoreceptors. In association with glucose transporter SLC16A1/GLUT1 and NXNL1, promotes retinal cone survival by enhancing aerobic glycolysis and accelerating the entry of glucose into photoreceptors. Functionally, signaling receptor for cyclophilins, essential for PPIA/CYPA and PPIB/CYPB-dependent signaling related to chemotaxis and adhesion of immune cells. Plays an important role in targeting the monocarboxylate transporters SLC16A1/GLUT1 and SLC16A3 to the plasma membrane. Acts as a coreceptor for vascular endothelial growth factor receptor 2 (KDR/VEGFR2) in endothelial cells enhancing its VEGFA-mediated activation and downstream signaling. Promotes angiogenesis through EPAS1/HIF2A-mediated up-regulation of VEGFA and KDR/VEGFR2 in endothelial cells. Plays an important role in spermatogenesis; mediates interactions between germ cells and Sertoli cell and is essential for the development/differentiation of germ cells to round spermatids. This Rattus norvegicus (Rat) protein is Basigin (Bsg).